A 75-amino-acid polypeptide reads, in one-letter code: Protein RegB (75 aa).

In terms of biological role, required for optimal exotoxin A production. The protein is Protein RegB (regB) of Pseudomonas aeruginosa (strain ATCC 15692 / DSM 22644 / CIP 104116 / JCM 14847 / LMG 12228 / 1C / PRS 101 / PAO1).